Reading from the N-terminus, the 405-residue chain is Acetate kinase (405 aa).

N7 contributes to the Mg(2+) binding site. K14 contacts ATP. R99 serves as a coordination point for substrate. Catalysis depends on D156, which acts as the Proton donor/acceptor. Residue 215–219 (HLGNG) coordinates ATP. E391 contacts Mg(2+).

Belongs to the acetokinase family. As to quaternary structure, homodimer. Requires Mg(2+) as cofactor. Mn(2+) serves as cofactor.

It localises to the cytoplasm. It catalyses the reaction acetate + ATP = acetyl phosphate + ADP. The protein operates within metabolic intermediate biosynthesis; acetyl-CoA biosynthesis; acetyl-CoA from acetate: step 1/2. Its function is as follows. Catalyzes the formation of acetyl phosphate from acetate and ATP. Can also catalyze the reverse reaction. This is Acetate kinase from Nostoc sp. (strain PCC 7120 / SAG 25.82 / UTEX 2576).